Here is a 1925-residue protein sequence, read N- to C-terminus: Diacylglycerol kinase eta (1925 aa).

A PH domain is found at alanine 82 to alanine 175. 2 consecutive Phorbol-ester/DAG-type zinc fingers follow at residues histidine 195 to cysteine 245 and proline 268 to cysteine 319. The 137-residue stretch at glycine 350 to lysine 486 folds into the DAGKc domain. 8 disordered regions span residues glutamate 620–glutamate 641, alanine 783–glutamate 805, aspartate 847–glutamine 872, threonine 1013–glutamine 1065, aspartate 1113–tyrosine 1141, asparagine 1167–serine 1234, isoleucine 1256–aspartate 1276, and phenylalanine 1385–glutamate 1405. The segment covering leucine 792–threonine 802 has biased composition (polar residues). The segment covering alanine 863–glutamine 872 has biased composition (basic and acidic residues). Basic and acidic residues predominate over residues asparagine 1115–glutamate 1128. Over residues asparagine 1167 to threonine 1187 the composition is skewed to low complexity. Basic and acidic residues predominate over residues serine 1386 to glutamate 1405. An SAM domain is found at tryptophan 1862–asparagine 1925.

It belongs to the eukaryotic diacylglycerol kinase family.

Its subcellular location is the cytoplasm. The catalysed reaction is a 1,2-diacyl-sn-glycerol + ATP = a 1,2-diacyl-sn-glycero-3-phosphate + ADP + H(+). Functionally, phosphorylates diacylglycerol (DAG) to generate phosphatidic acid (PA). This chain is Diacylglycerol kinase eta, found in Drosophila mojavensis (Fruit fly).